The chain runs to 380 residues: Queuine tRNA-ribosyltransferase (380 aa).

Asp-96 acts as the Proton acceptor in catalysis. Substrate-binding positions include 96–100 (DSGGF), Asp-150, Gln-193, and Gly-220. The tract at residues 251–257 (GVGAPDS) is RNA binding. Residue Asp-270 is the Nucleophile of the active site. The interval 275–279 (TRIAR) is RNA binding; important for wobble base 34 recognition. Zn(2+) contacts are provided by Cys-308, Cys-310, Cys-313, and His-339.

The protein belongs to the queuine tRNA-ribosyltransferase family. In terms of assembly, homodimer. Within each dimer, one monomer is responsible for RNA recognition and catalysis, while the other monomer binds to the replacement base PreQ1. Requires Zn(2+) as cofactor.

The catalysed reaction is 7-aminomethyl-7-carbaguanine + guanosine(34) in tRNA = 7-aminomethyl-7-carbaguanosine(34) in tRNA + guanine. It participates in tRNA modification; tRNA-queuosine biosynthesis. In terms of biological role, catalyzes the base-exchange of a guanine (G) residue with the queuine precursor 7-aminomethyl-7-deazaguanine (PreQ1) at position 34 (anticodon wobble position) in tRNAs with GU(N) anticodons (tRNA-Asp, -Asn, -His and -Tyr). Catalysis occurs through a double-displacement mechanism. The nucleophile active site attacks the C1' of nucleotide 34 to detach the guanine base from the RNA, forming a covalent enzyme-RNA intermediate. The proton acceptor active site deprotonates the incoming PreQ1, allowing a nucleophilic attack on the C1' of the ribose to form the product. After dissociation, two additional enzymatic reactions on the tRNA convert PreQ1 to queuine (Q), resulting in the hypermodified nucleoside queuosine (7-(((4,5-cis-dihydroxy-2-cyclopenten-1-yl)amino)methyl)-7-deazaguanosine). This is Queuine tRNA-ribosyltransferase from Streptococcus pyogenes serotype M1.